Reading from the N-terminus, the 332-residue chain is Putative ketol-acid reductoisomerase 3 (332 aa).

Residues 1-182 form the KARI N-terminal Rossmann domain; the sequence is MDKTVLDASL…AIPGGIAVIS (182 aa). Residues 183-329 form the KARI C-terminal knotted domain; the sequence is SFEEEALLDL…KELYKILRRK (147 aa).

The protein belongs to the ketol-acid reductoisomerase family.

It carries out the reaction (2R)-2,3-dihydroxy-3-methylbutanoate + NADP(+) = (2S)-2-acetolactate + NADPH + H(+). It catalyses the reaction (2R,3R)-2,3-dihydroxy-3-methylpentanoate + NADP(+) = (S)-2-ethyl-2-hydroxy-3-oxobutanoate + NADPH + H(+). It functions in the pathway amino-acid biosynthesis; L-isoleucine biosynthesis; L-isoleucine from 2-oxobutanoate: step 2/4. The protein operates within amino-acid biosynthesis; L-valine biosynthesis; L-valine from pyruvate: step 2/4. The polypeptide is Putative ketol-acid reductoisomerase 3 (ilvC3) (Saccharolobus solfataricus (strain ATCC 35092 / DSM 1617 / JCM 11322 / P2) (Sulfolobus solfataricus)).